Reading from the N-terminus, the 329-residue chain is Basic leucine zipper 61 (329 aa).

2 disordered regions span residues 1 to 22 and 98 to 204; these read MAQLPPKIPTMTTPNWPDFSSQ and DDVH…HDPK. The span at 10–22 shows a compositional bias: polar residues; the sequence is TMTTPNWPDFSSQ. The segment covering 119–133 has biased composition (low complexity); it reads PTRSSSNTSTPSDHN. Residues 139–154 show a composition bias toward basic and acidic residues; sequence DNNKEAPPSDHDHHMD. Residues 155–169 are compositionally biased toward low complexity; sequence NNVANQNNAAGNNYN. The region spanning 202-254 is the bZIP domain; the sequence is DPKRVKRILANRQSAQRSRVRKLQYISELERSVTSLQTEVSVLSPRVAFLDHQ. The segment at 204–223 is basic motif; sequence KRVKRILANRQSAQRSRVRK. The tract at residues 230–251 is leucine-zipper; that stretch reads LERSVTSLQTEVSVLSPRVAFL. A compositionally biased stretch (polar residues) spans 304–313; sequence KMENNVSDQS. The interval 304–329 is disordered; it reads KMENNVSDQSPADIKPSVEKEQLLNV. Residues 319-329 are compositionally biased toward basic and acidic residues; the sequence is PSVEKEQLLNV.

In terms of assembly, forms heterodimers with BZIP18, BZIP43 and VIP1/BZIP51.

The protein resides in the nucleus. Transcriptional activator. The chain is Basic leucine zipper 61 from Arabidopsis thaliana (Mouse-ear cress).